The primary structure comprises 601 residues: Zinc finger protein 37 (601 aa).

A KRAB domain is found at 1 to 70 (MATPEPAESD…VRANKNSSSS (70 aa)). Phosphothreonine is present on T3. Position 9 is a phosphoserine (S9). The span at 30–43 (ETCSNPASMGNQDP) shows a compositional bias: polar residues. The tract at residues 30–254 (ETCSNPASMG…SKSDKAPGSG (225 aa)) is disordered. Low complexity predominate over residues 60 to 70 (SVRANKNSSSS). Residues 77–88 (TGTSAKVQQDGA) show a composition bias toward polar residues. Composition is skewed to basic and acidic residues over residues 115–136 (KSSE…PSEK), 164–174 (KKPDTANEYRK), and 183–238 (VNRD…EKRK). The segment at 257 to 279 (YECNQCGKVLSHKQGLLDHQRTH) adopts a C2H2-type 1 zinc-finger fold. A C2H2-type 2; atypical zinc finger spans residues 285–303 (YECYECGIAFSQKSHLVVH). 10 C2H2-type zinc fingers span residues 314 to 337 (YECV…RISH), 343 to 365 (YKCN…IRSH), 371 to 393 (YECK…VRTH), 399 to 421 (YECN…MRIH), 427 to 449 (FECT…QRTH), 455 to 477 (YKCK…MRTH), 483 to 505 (FECN…QRVH), 511 to 533 (YECV…QRTH), 539 to 561 (FECY…QRSH), and 570 to 592 (YECV…MKTH).

Belongs to the krueppel C2H2-type zinc-finger protein family. In terms of tissue distribution, expressed in testes, brain, kidney, spleen, thymus, lung, and at low levels in liver.

It localises to the nucleus. Its function is as follows. May be involved in transcriptional regulation. The polypeptide is Zinc finger protein 37 (Zfp37) (Rattus norvegicus (Rat)).